The following is a 628-amino-acid chain: Chaperone protein HtpG (628 aa).

An a; substrate-binding region spans residues 1–334; the sequence is MTTIDTASET…SEDLPLNLSR (334 aa). The b stretch occupies residues 335–550; the sequence is EMLQNNPQLA…GFGPDRELEK (216 aa). Residues 551–628 form a c region; sequence MLARANKGAA…LVLRGVVAHG (78 aa).

It belongs to the heat shock protein 90 family. Homodimer.

The protein resides in the cytoplasm. Functionally, molecular chaperone. Has ATPase activity. The protein is Chaperone protein HtpG of Rhodopseudomonas palustris (strain HaA2).